We begin with the raw amino-acid sequence, 416 residues long: Putative L-glutamine:3-amino-2,3-dideoxy-scyllo-inosose aminotransferase (416 aa).

Position 199 is an N6-(pyridoxal phosphate)lysine (Lys199).

It belongs to the DegT/DnrJ/EryC1 family. L-glutamine:2-deoxy-scyllo-inosose/scyllo-inosose aminotransferase subfamily. Pyridoxal 5'-phosphate serves as cofactor.

It catalyses the reaction 3-amino-2,3-dideoxy-scyllo-inosose + L-glutamine = 2-deoxystreptamine + 2-oxoglutaramate. It participates in metabolic intermediate biosynthesis; 2-deoxystreptamine biosynthesis; 2-deoxystreptamine from D-glucose 6-phosphate: step 4/4. It functions in the pathway antibiotic biosynthesis; tobramycin biosynthesis. Functionally, catalyzes the transamination of 3-amino-2,3-dideoxy-scyllo-inosose (amino-DOI) into 2-deoxystreptamine (DOS). The polypeptide is Putative L-glutamine:3-amino-2,3-dideoxy-scyllo-inosose aminotransferase (tobS2) (Streptoalloteichus tenebrarius (strain ATCC 17920 / DSM 40477 / JCM 4838 / CBS 697.72 / NBRC 16177 / NCIMB 11028 / NRRL B-12390 / A12253. 1 / ISP 5477) (Streptomyces tenebrarius)).